Here is a 144-residue protein sequence, read N- to C-terminus: Large ribosomal subunit protein uL15 (144 aa).

The interval 1-54 (MKLNTIKPAEGAKHARRRVGRGIGSGLGKTGGRGHKGQKSRAGGFHKVGFEGGQ) is disordered. Residues 21-31 (RGIGSGLGKTG) show a composition bias toward gly residues.

The protein belongs to the universal ribosomal protein uL15 family. In terms of assembly, part of the 50S ribosomal subunit.

Functionally, binds to the 23S rRNA. The polypeptide is Large ribosomal subunit protein uL15 (Methylobacillus flagellatus (strain ATCC 51484 / DSM 6875 / VKM B-1610 / KT)).